We begin with the raw amino-acid sequence, 562 residues long: Tetratricopeptide repeat protein 39A (562 aa).

TPR repeat units lie at residues 273–306 (AIFL…QQNW), 463–496 (CVVK…EKRI), and 504–537 (PNAM…YKNY).

The protein belongs to the TTC39 family.

This Xenopus tropicalis (Western clawed frog) protein is Tetratricopeptide repeat protein 39A (ttc39a).